Here is a 1176-residue protein sequence, read N- to C-terminus: MLRSISIASRAAGPVRPVARARTAVGVVAPPRVCCCAPAVGNYGQVDGKATLNSLRRLPAGYRPRSCPSSRSPDVKKVLVVGSGGLSIGQAGEFDYSGSQAIKALRESNIETILINPNIATIQTSHHLASEIYFLPVTADYVAYVLEKERPDGILLTFGGQSALNVGIQLEKMGVLERLGVQVLGTPIRTLEISEDRDLFVQALNEIDIPAAQSTAVSTIQDALDAAKTIGYPIILRSAFSLGGLGSFPHDEEELRNLAAKSLSLSPQVLIEKSLKGWKEVEYEVVRDAADNTIICCNMENFDPLGTHTGDSIVVAPSQTLTDEYHMLRSAAIKIVRHVGVVGECNVQYALDPNSRDYRVIEMNARLSRSSALASKATGYPLAYTAAKIALGHTLRELPNAVTKSTTACFEPSLDYIVTKIPKWDLAKFQHVERNVGSAMKSVGEVMAIGRTFEESLQKAIRQVDPNFAGFEAYWKPEDMITALTNNNDRRLFAIAHAMLNLDYSVDYLHDLTKIDKWFLYKLENIVAVHKQLRSTPFEQLDKELVMTAKKTGFSDLQIAQLTGKTEAEVRTLRKQFGVTPFVKRIDTLAAEFPAYTNYLYTSYNATTHDVKFDNGTMVLGSGVYRIGSSVEFDWCAVTCSRAIRDLGKKTIMINYNPETVSTDFDEADRLYFEELGFERVMDIYDLEGASGVVVSVGGQLPQNIALRLKKAGVQVLGTDPEMIDSAEDRHKFSSILDSIGVDQPAWTEASSLASAKEFANRVGYPVLIRPSYVLSGAAMNVVWDEAQLEHNLTLATNVSPDHPVVISQFIDNAQEIDVDAVAHKGKLLVHAVSEHVENAGVHSGDATLVLPPFSVNQHDLGRLKTIAEKVAQAFQISGPFNMQIIRKPPTGEEDAELKVIECNLRASRSFPFVSKVLGHNFIDTASAAIMDTNVPAPIDLMAQKRDYVAIKVPQFSWTRLPGADPFLGVEMASTGEVASFGKDIYDAYWAALLSVNGMKLPKANSGILLGGDITRPEMTEVAKNLINLGFSLYTYDPKVEAHINDQPYLSIKKILVPVKDKKKLREILEEHEIQTVINMARSRAATTLDEDYAARRAAVDFGIPLINNPKLAVLFTETLEKKFVKNNPIPYSEGFKPSEVGSWRDFVGEAATTKLEGIAWTGEAYCIILIPGIGV.

The N-terminal 11 residues, 1-11 (MLRSISIASRA), are a transit peptide targeting the mitochondrion. Residues 70-465 (SRSPDVKKVL…SLQKAIRQVD (396 aa)) are carboxyphosphate synthetic domain. ATP contacts are provided by Arg-197, Arg-237, Gly-243, Gly-244, Lys-273, Leu-275, Glu-280, Gly-306, Thr-307, His-308, Gln-348, and Glu-362. An ATP-grasp 1 domain is found at 201 to 391 (VQALNEIDIP…LAYTAAKIAL (191 aa)). Positions 348, 362, and 364 each coordinate Mg(2+). 3 residues coordinate Mn(2+): Gln-348, Glu-362, and Asn-364. Residues 466-610 (PNFAGFEAYW…YTSYNATTHD (145 aa)) form an oligomerization domain region. The tract at residues 611–997 (VKFDNGTMVL…AYWAALLSVN (387 aa)) is carbamoyl phosphate synthetic domain. The region spanning 734–931 (SSILDSIGVD…FIDTASAAIM (198 aa)) is the ATP-grasp 2 domain. Positions 770, 809, 811, 816, 841, 842, 843, 844, 884, and 902 each coordinate ATP. Mg(2+) contacts are provided by Gln-884, Glu-902, and Asn-904. Residues Gln-884, Glu-902, and Asn-904 each contribute to the Mn(2+) site. Residues 998–1137 (GMKLPKANSG…NPIPYSEGFK (140 aa)) form an allosteric domain region. In terms of domain architecture, MGS-like spans 999 to 1154 (MKLPKANSGI…RDFVGEAATT (156 aa)).

This sequence belongs to the CarB family. Heterodimer composed of 2 chains; the small (or glutamine) chain promotes the hydrolysis of glutamine to ammonia, which is used by the large (or ammonia) chain to synthesize carbamoyl phosphate. Requires Mg(2+) as cofactor. The cofactor is Mn(2+).

It is found in the mitochondrion. It carries out the reaction hydrogencarbonate + L-glutamine + 2 ATP + H2O = carbamoyl phosphate + L-glutamate + 2 ADP + phosphate + 2 H(+). It catalyses the reaction hydrogencarbonate + NH4(+) + 2 ATP = carbamoyl phosphate + 2 ADP + phosphate + 2 H(+). Its pathway is amino-acid biosynthesis; L-arginine biosynthesis; carbamoyl phosphate from bicarbonate: step 1/1. In terms of biological role, large subunit of the arginine-specific carbamoyl phosphate synthase (CPSase). CPSase catalyzes the formation of carbamoyl phosphate from the ammonia moiety of glutamine, hydrogencarbonate, and phosphate donated by ATP, constituting the first step of 2 biosynthetic pathways, one leading to arginine and/or urea and the other to pyrimidine nucleotides. The large subunit (synthetase) binds the substrates ammonia (free or transferred from glutamine from the small subunit), hydrogencarbonate and ATP and carries out an ATP-coupled ligase reaction, activating hydrogencarbonate by forming carboxy phosphate which reacts with ammonia to form carbamoyl phosphate. This Cutaneotrichosporon cutaneum (Yeast) protein is Carbamoyl phosphate synthase arginine-specific large chain (argA).